The following is a 122-amino-acid chain: Large ribosomal subunit protein uL22 (122 aa).

The protein belongs to the universal ribosomal protein uL22 family. In terms of assembly, part of the 50S ribosomal subunit.

Functionally, this protein binds specifically to 23S rRNA; its binding is stimulated by other ribosomal proteins, e.g. L4, L17, and L20. It is important during the early stages of 50S assembly. It makes multiple contacts with different domains of the 23S rRNA in the assembled 50S subunit and ribosome. The globular domain of the protein is located near the polypeptide exit tunnel on the outside of the subunit, while an extended beta-hairpin is found that lines the wall of the exit tunnel in the center of the 70S ribosome. The protein is Large ribosomal subunit protein uL22 of Thermosynechococcus vestitus (strain NIES-2133 / IAM M-273 / BP-1).